Here is a 213-residue protein sequence, read N- to C-terminus: Protein brother (213 aa).

A disordered region spans residues 189–213 (HTPQTPPEDHHHRGGPGLPRGPMGW). The segment covering 203–213 (GPGLPRGPMGW) has biased composition (gly residues).

This sequence belongs to the CBF-beta family.

It localises to the nucleus. Its function is as follows. Regulates the DNA-binding properties of Runt. In Drosophila melanogaster (Fruit fly), this protein is Protein brother (Bro).